The primary structure comprises 488 residues: Proline--tRNA ligase (488 aa).

This sequence belongs to the class-II aminoacyl-tRNA synthetase family. ProS type 3 subfamily. Homodimer.

It localises to the cytoplasm. The enzyme catalyses tRNA(Pro) + L-proline + ATP = L-prolyl-tRNA(Pro) + AMP + diphosphate. Catalyzes the attachment of proline to tRNA(Pro) in a two-step reaction: proline is first activated by ATP to form Pro-AMP and then transferred to the acceptor end of tRNA(Pro). This Borreliella burgdorferi (strain ZS7) (Borrelia burgdorferi) protein is Proline--tRNA ligase.